A 727-amino-acid chain; its full sequence is Testis anion transporter 1 (727 aa).

Residues 1 to 23 lie on the Cytoplasmic side of the membrane; that stretch reads MLTIFPFLEWMCMYRLKDWLLGD. The helical transmembrane segment at 24 to 44 threads the bilayer; that stretch reads LLAGISVGLVQVPQGLTLSLL. The Extracellular segment spans residues 45-47; the sequence is ARQ. A helical membrane pass occupies residues 48 to 68; sequence LIPPLNIAYAAFCSSVIYVIF. Residues 69–74 are Cytoplasmic-facing; that stretch reads GSCHQM. The chain crosses the membrane as a helical span at residues 75-95; sequence SIGSFFLVSALLINVLKISPL. The Extracellular portion of the chain corresponds to 96–130; that stretch reads NNGHLVMGSFLKDEFSAPSYLMGYNKSLSVVATTT. The N-linked (GlcNAc...) asparagine glycan is linked to Asn-120. Residues 131–151 traverse the membrane as a helical segment; the sequence is FLTGIIQLIMGVLGLGFIATY. Over 152–160 the chain is Cytoplasmic; sequence LPESAMSAY. A helical membrane pass occupies residues 161 to 181; that stretch reads LAAVALHIMLSQLTCIFGIMI. At 182-198 the chain is on the extracellular side; sequence SFHAGPISFFYDIINYC. A helical membrane pass occupies residues 199 to 219; it reads VALPKANSTSILLFLTVVVAL. The Cytoplasmic portion of the chain corresponds to 220 to 235; the sequence is RINKCIRISFNQYPIE. A helical transmembrane segment spans residues 236–256; sequence FPMELFLIIGFTVIGNKITMA. Residues 257–283 are Extracellular-facing; that stretch reads TETSQTLIDMIPYSFLFPVTPDFSVLP. Residues 284-304 form a helical membrane-spanning segment; it reads KIILQAISLSLVSSFLLVFLG. Residues 305–360 lie on the Cytoplasmic side of the membrane; it reads KKIASLHNYSVNSNQDLIAIGLCNVVSSFFRSCVFTGAVARTIIQDKSGGRQQFAS. A helical transmembrane segment spans residues 361–381; that stretch reads LVGAGVMLLLMVKMGHFFYAL. At 382–383 the chain is on the extracellular side; that stretch reads PN. Residues 384–404 form a helical membrane-spanning segment; it reads AVLAGIILSNVVPYLETISNL. Residues 405-424 are Cytoplasmic-facing; the sequence is PSLWRQDQYDCALWMMTFSS. A helical transmembrane segment spans residues 425–445; that stretch reads SIFLGLDIGLIISVVSAFFIT. The Extracellular portion of the chain corresponds to 446–727; sequence SVRSHRAKIL…LPSFHLQHIF (282 aa). In terms of domain architecture, STAS spans 471 to 722; that stretch reads DYREIITIPG…NSLSRLPSFH (252 aa). Residues 592 to 727 form an interaction with RACGAP1 region; that stretch reads TVSSMSQKNQ…LPSFHLQHIF (136 aa).

This sequence belongs to the SLC26A/SulP transporter (TC 2.A.53) family. As to quaternary structure, interacts with RACGAP1. Interacts with CFTR; stimulates anion transport activity of CFTR. N-glycosylated.

It is found in the membrane. It carries out the reaction sulfate(out) + chloride(in) = sulfate(in) + chloride(out). It catalyses the reaction oxalate(in) + chloride(out) = oxalate(out) + chloride(in). In terms of biological role, antiporter that mediates the exchange of sulfate and oxalate against chloride ions across a membrane. Stimulates anion transport activity of CFTR. May cooperate with CFTR in the regulation of chloride and bicarbonate ions fluxes required for activation of the ADCY10/PKA pathway during sperm motility and sperm capacitation. May play a role in sperm tail differentiation and motility and hence male fertility. This Macaca fascicularis (Crab-eating macaque) protein is Testis anion transporter 1.